The chain runs to 203 residues: Urease accessory protein UreG (203 aa).

Position 14–21 (14–21) interacts with GTP; that stretch reads GPVGSGKT.

This sequence belongs to the SIMIBI class G3E GTPase family. UreG subfamily. As to quaternary structure, homodimer. UreD, UreF and UreG form a complex that acts as a GTP-hydrolysis-dependent molecular chaperone, activating the urease apoprotein by helping to assemble the nickel containing metallocenter of UreC. The UreE protein probably delivers the nickel.

Its subcellular location is the cytoplasm. Its function is as follows. Facilitates the functional incorporation of the urease nickel metallocenter. This process requires GTP hydrolysis, probably effectuated by UreG. The protein is Urease accessory protein UreG of Rhizobium etli (strain ATCC 51251 / DSM 11541 / JCM 21823 / NBRC 15573 / CFN 42).